A 255-amino-acid polypeptide reads, in one-letter code: Sporulation-specific N-acetylmuramoyl-L-alanine amidase (255 aa).

Residues 4-172 (IFIDPGHGGS…LARGHANGLE (169 aa)) enclose the MurNAc-LAA domain. The Zn(2+) site is built by His-10, Glu-24, and His-79. Glu-141 is a catalytic residue. An SPOR domain is found at 180–254 (TSSSGLYKVQ…AGFDAIVILE (75 aa)). A run of 2 repeats spans residues 184 to 219 (GLYKVQIGAFKVKANADSLASNAEAKGFDSIVLLKD) and 220 to 255 (GLYKVQIGAFSSKDNADTLAARAKNAGFDAIVILES). Positions 184–255 (GLYKVQIGAF…GFDAIVILES (72 aa)) are 2 X 35 AA approximate tandem repeats.

It belongs to the N-acetylmuramoyl-L-alanine amidase 3 family. Requires Zn(2+) as cofactor.

It localises to the secreted. Its subcellular location is the cell wall. It catalyses the reaction Hydrolyzes the link between N-acetylmuramoyl residues and L-amino acid residues in certain cell-wall glycopeptides.. Its activity is regulated as follows. Inhibited by EDTA. Its function is as follows. Autolysins are involved in some important biological processes such as cell separation, cell-wall turnover, competence for genetic transformation, formation of the flagella - in particular of its basal body - and sporulation. CwlC is able to hydrolyze type A cell walls such as B.subtilis. Its main function is to lyze the mother cell wall peptidoglycan, playing a role during sporulation. This Bacillus subtilis (strain 168) protein is Sporulation-specific N-acetylmuramoyl-L-alanine amidase (cwlC).